The primary structure comprises 196 residues: MVIGAVLAGGISKRFGEDKLTYRVGGKPLILYTIEALESASKIEKIVVIASPFNWQKFRELGLEVIVDALMVGPLGGIYLALSLGDSFVVGGDMPLLVPEFIDYLVAKFEEAKKLACVPRWPNGYLEPLHAVYSRSLREIIEGYIERGEYKVGNVIESSNPCYIPVESLPERWKWAFFNINKKEDLRKLKTFIKEF.

Residues 7–9, lysine 19, aspartate 68, and aspartate 93 contribute to the GTP site; that span reads LAG. A Mg(2+)-binding site is contributed by aspartate 93.

Belongs to the MobA family. Mg(2+) is required as a cofactor.

Its subcellular location is the cytoplasm. It catalyses the reaction Mo-molybdopterin + GTP + H(+) = Mo-molybdopterin guanine dinucleotide + diphosphate. Its function is as follows. Transfers a GMP moiety from GTP to Mo-molybdopterin (Mo-MPT) cofactor (Moco or molybdenum cofactor) to form Mo-molybdopterin guanine dinucleotide (Mo-MGD) cofactor. This chain is Probable molybdenum cofactor guanylyltransferase, found in Pyrococcus furiosus (strain ATCC 43587 / DSM 3638 / JCM 8422 / Vc1).